Here is a 439-residue protein sequence, read N- to C-terminus: MNHKVGFVSLGCPKALVDSERIITQLKAQGYELVPTYEDAGVVVINTCGFIDSAVQESLDTIKEAMAENGRVIVTGCLGAKADVIKNACPDVLHISGAHAYEEVVNAVHQHLPPPADPFTQLIPPQGIKLTPRHYAYLKISEGCNQKCTFCIIPTMRGKLQSYPMAQILTEAKKLKQAGVKELLVISQDTSAYGVDTRYQQIEWQGKTVNTRFYDLCEQLGELGIWVRLHYVYPYPHVDDIVPLMRDGLILPYLDIPLQHANSRILKAMKRPASSENTLLRIASWREICPDITLRSTFIVGFPGETEEEFSELLAFLKEAQLDRVGCFKYSPVEGAKANDLDNPVSEDIKEERYHRFMQVQAEISRNKLKNKIGSTQTVLIDEITEDQIIARSKSDAPEIDGLVYLPKISGITVGSFAEAMITDSDDYDLYGDLEYSLA.

The 111-residue stretch at 3-113 (HKVGFVSLGC…VVNAVHQHLP (111 aa)) folds into the MTTase N-terminal domain. [4Fe-4S] cluster-binding residues include C12, C48, C77, C144, C148, and C151. The Radical SAM core domain occupies 130–367 (LTPRHYAYLK…MQVQAEISRN (238 aa)). In terms of domain architecture, TRAM spans 370-436 (KNKIGSTQTV…DYDLYGDLEY (67 aa)).

It belongs to the methylthiotransferase family. RimO subfamily. The cofactor is [4Fe-4S] cluster.

The protein resides in the cytoplasm. The enzyme catalyses L-aspartate(89)-[ribosomal protein uS12]-hydrogen + (sulfur carrier)-SH + AH2 + 2 S-adenosyl-L-methionine = 3-methylsulfanyl-L-aspartate(89)-[ribosomal protein uS12]-hydrogen + (sulfur carrier)-H + 5'-deoxyadenosine + L-methionine + A + S-adenosyl-L-homocysteine + 2 H(+). Catalyzes the methylthiolation of an aspartic acid residue of ribosomal protein uS12. The sequence is that of Ribosomal protein uS12 methylthiotransferase RimO from Legionella pneumophila (strain Paris).